The following is a 140-amino-acid chain: Oocyte zinc finger protein XlCOF15 (140 aa).

C2H2-type zinc fingers lie at residues Phe-6–His-28, Phe-34–His-56, Phe-62–His-84, Phe-90–His-112, and Phe-118–His-140.

Belongs to the krueppel C2H2-type zinc-finger protein family.

It is found in the nucleus. In terms of biological role, may be involved in transcriptional regulation. The protein is Oocyte zinc finger protein XlCOF15 of Xenopus laevis (African clawed frog).